A 542-amino-acid polypeptide reads, in one-letter code: Peptide chain release factor 3 (542 aa).

A tr-type G domain is found at 14–283 (ERRRNFAIIS…AFLDYALKPA (270 aa)). GTP is bound by residues 23 to 30 (SHPDAGKT), 91 to 95 (DTPGH), and 145 to 148 (NKLD).

This sequence belongs to the TRAFAC class translation factor GTPase superfamily. Classic translation factor GTPase family. PrfC subfamily.

The protein localises to the cytoplasm. Its function is as follows. Increases the formation of ribosomal termination complexes and stimulates activities of RF-1 and RF-2. It binds guanine nucleotides and has strong preference for UGA stop codons. It may interact directly with the ribosome. The stimulation of RF-1 and RF-2 is significantly reduced by GTP and GDP, but not by GMP. In Cyanothece sp. (strain PCC 7425 / ATCC 29141), this protein is Peptide chain release factor 3.